A 327-amino-acid chain; its full sequence is tRNA uridine(34) hydroxylase (327 aa).

The Rhodanese domain maps to 122-218 (QENRCLVLDV…YGLKMGTGKW (97 aa)). Cys178 functions as the Cysteine persulfide intermediate in the catalytic mechanism.

It belongs to the TrhO family.

It catalyses the reaction uridine(34) in tRNA + AH2 + O2 = 5-hydroxyuridine(34) in tRNA + A + H2O. Functionally, catalyzes oxygen-dependent 5-hydroxyuridine (ho5U) modification at position 34 in tRNAs. The sequence is that of tRNA uridine(34) hydroxylase from Chlamydia trachomatis serovar L2 (strain ATCC VR-902B / DSM 19102 / 434/Bu).